Here is a 933-residue protein sequence, read N- to C-terminus: Progesterone receptor (933 aa).

Residues 1–164 (MTELKAKGPR…PATQGVLSPL (164 aa)) are AF3; mediates transcriptional activation. A disordered region spans residues 1-256 (MTELKAKGPR…AAAGGGAAAV (256 aa)). Positions 1–566 (MTELKAKGPR…YSFESLPQKI (566 aa)) are modulating, Pro-Rich. Ser20 carries the post-translational modification Phosphoserine. The LXXL motif 1 signature appears at 55 to 59 (LDGLL). Phosphoserine is present on Ser81. Residues 115–119 (LETLL) carry the LXXL motif 2 motif. A phosphoserine mark is found at Ser130 and Ser162. Residues 165 to 305 (MSRSGGKAGD…LATTVMDFIH (141 aa)) are mediates transcriptional transrepression. The short motif at 183 to 187 (KVLPR) is the Nuclear localization signal element. Phosphoserine occurs at positions 190 and 213. Over residues 220 to 231 (EVEEEDGSESEE) the composition is skewed to acidic residues. Positions 232 to 246 (SAGPLLKGKPRALGG) are enriched in low complexity. A Phosphoserine; by MAPK1 modification is found at Ser294. A disordered region spans residues 331 to 378 (GGAGAASAFAPPRSSPSASSTPVAVGDFPDCAYPPDAEPKDDAYPLYS). The span at 335-350 (AASAFAPPRSSPSASS) shows a compositional bias: low complexity. Phosphoserine; by MAPK is present on Ser345. A Glycyl lysine isopeptide (Lys-Gly) (interchain with G-Cter in SUMO); alternate cross-link involves residue Lys388. A Glycyl lysine isopeptide (Lys-Gly) (interchain with G-Cter in ubiquitin); alternate cross-link involves residue Lys388. Ser400 carries the post-translational modification Phosphoserine; by CDK2. Residues 415–452 (PDFPLGPPPPLPPRAPPSRPGEAAVTAAPASASVSSAS) are disordered. The span at 418 to 433 (PLGPPPPLPPRAPPSR) shows a compositional bias: pro residues. Over residues 434–452 (PGEAAVTAAPASASVSSAS) the composition is skewed to low complexity. The interval 456–546 (STLECILYKA…VYPPYLNYLR (91 aa)) is AF1; mediates transcriptional activation. Lys531 is covalently cross-linked (Glycyl lysine isopeptide (Lys-Gly) (interchain with G-Cter in SUMO)). 2 consecutive NR C4-type zinc fingers follow at residues 567-587 (CLIC…CGSC) and 603-627 (CAGR…LRKC). Residues 567-639 (CLICGDEASG…AGMVLGGRKF (73 aa)) constitute a DNA-binding region (nuclear receptor). Ser676 is subject to Phosphoserine. The 235-residue stretch at 679-913 (QDIQLIPPLI…EFPEMMSEVI (235 aa)) folds into the NR LBD domain. The tract at residues 687-933 (LINLLMSIEP…MVKPLLFHKK (247 aa)) is AF2; mediates transcriptional activation. Arg766 is a progesterone binding site.

It belongs to the nuclear hormone receptor family. Interacts with SMARD1 and UNC45A. Interacts with CUEDC2; the interaction promotes ubiquitination, decreases sumoylation, and represses transcriptional activity. Interacts with PIAS3; the interaction promotes sumoylation of PR in a hormone-dependent manner, inhibits DNA-binding, and alters nuclear export. Interacts with SP1; the interaction requires ligand-induced phosphorylation on Ser-345 by ERK1/2-MAPK. Interacts with PRMT2. Interacts with NCOA2 and NCOA1. Interacts with KLF9. Interacts with GTF2B. Phosphorylated on multiple serine sites. Several of these sites are hormone-dependent. Phosphorylation on Ser-294 is highly hormone-dependent and modulates ubiquitination and sumoylation on Lys-388. Phosphorylation on Ser-102 and Ser-345 also requires induction by hormone. Basal phosphorylation on Ser-81, Ser-162, Ser-190 and Ser-400 is increased in response to progesterone and can be phosphorylated in vitro by the CDK2-A1 complex. Increased levels of phosphorylation on Ser-400 also in the presence of EGF, heregulin, IGF, PMA and FBS. Phosphorylation at this site by CDK2 is ligand-independent, and increases nuclear translocation and transcriptional activity. Phosphorylation at Ser-162 and Ser-294, but not at Ser-190, is impaired during the G(2)/M phase of the cell cycle. Phosphorylation on Ser-345 by ERK1/2 MAPK is required for interaction with SP1. In terms of processing, sumoylation is hormone-dependent and represses transcriptional activity. Sumoylation on all three sites is enhanced by PIAS3. Desumoylated by SENP1. Sumoylation on Lys-388, the main site of sumoylation, is repressed by ubiquitination on the same site, and modulated by phosphorylation at Ser-294. Post-translationally, ubiquitination is hormone-dependent and represses sumoylation on the same site. Promoted by MAPK-mediated phosphorylation on Ser-294. Ubiquitinated by UBR5, leading to its degradation: UBR5 specifically recognizes and binds ligand-bound PGR when it is not associated with coactivators (NCOAs). In presence of NCOAs, the UBR5-degron is not accessible, preventing its ubiquitination and degradation. Palmitoylated by ZDHHC7 and ZDHHC21. Palmitoylation is required for plasma membrane targeting and for rapid intracellular signaling via ERK and AKT kinases and cAMP generation.

It localises to the nucleus. The protein localises to the cytoplasm. The steroid hormones and their receptors are involved in the regulation of eukaryotic gene expression and affect cellular proliferation and differentiation in target tissues. Transcriptional activator of several progesteron-dependent promoters in a variety of cell types. Involved in activation of SRC-dependent MAPK signaling on hormone stimulation. The protein is Progesterone receptor (PGR) of Gorilla gorilla gorilla (Western lowland gorilla).